Here is a 363-residue protein sequence, read N- to C-terminus: MTTENQNPLVLDKNEEISQQKADDIRLQLRQEPEVKRLAQQIDVKNQMELLEYGKEPAVEISKFSDRILGMMKTTSVTDSGTMLTQLGKIMDRFDKNDFDEPKGLMAKIFKRGGSMIEKIFKKYQTLGGEIEKIHVEISKYKDEMTKTNYTLDEMYENNIKYYMELEKYVVAGQMKLEEMQSILPSYEEKAASGNQLAQMQLDTLRNGIQALEERVYDLDMARMVALQTAPQIRLLQRGNAKLIGKINSAFIITIPIFKNGIIQAVTVKRQKLVADSMSELDRRTNEMLKRNAENISSQSVEIARMAGRPSIDIETIESSWNTIVSGMQETKQIEEENKRLREDGARRIAQLQDNIKKAALQQ.

Belongs to the TelA family.

This is an uncharacterized protein from Bacillus subtilis (strain 168).